The sequence spans 201 residues: Ras-related protein Rab-1B (201 aa).

An N-acetylmethionine modification is found at Met-1. Positions 17, 18, 19, 20, 21, 22, 23, 33, 34, 35, 36, 39, and 40 each coordinate GTP. Mg(2+) is bound at residue Ser-22. The short motif at 30-45 (DDTYTESYISTIGVDF) is the Switch 1 element. Thr-40 and Asp-63 together coordinate Mg(2+). Residues 64 to 83 (TAGQERFRTVTSSYYRGAHG) are switch 2 region; required for interaction with REP1/CHM. Positions 65-80 (AGQERFRTVTSSYYRG) match the Switch 2 motif. GTP-binding residues include Gly-66, Asn-121, Lys-122, Asp-124, Ser-151, Ala-152, and Lys-153. Positions 173–201 (MGPGAASGGERPNLKIDSTPVKSASGGCC) are disordered. Residues Cys-200 and Cys-201 are each lipidated (S-geranylgeranyl cysteine). Cysteine methyl ester is present on Cys-201.

The protein belongs to the small GTPase superfamily. Rab family. As to quaternary structure, interacts with MICAL1 and MICAL2. Interacts (in GTP-bound form) with MICALCL, MICAL1 and MILCAL3. Interacts with GDI1; the interaction requires the GDP-bound state. Interacts with CHM/REP1; the interaction requires the GDP-bound form and is necessary for prenylation by GGTase II. Interacts with RabGAP TBC1D20. Interacts (in GDP-bound form) with lipid phosphatase MTMR6 (via GRAM domain); the interaction regulates MTMR6 recruitment to the endoplasmic reticulum-Golgi intermediate compartment. Interacts (in GDP-bound form) with lipid phosphatase MTMR7. It depends on Mg(2+) as a cofactor. Prenylated; by GGTase II, only after interaction of the substrate with Rab escort protein 1 (REP1).

It is found in the cytoplasm. It localises to the membrane. The protein localises to the preautophagosomal structure membrane. The protein resides in the perinuclear region. It catalyses the reaction GTP + H2O = GDP + phosphate + H(+). With respect to regulation, regulated by guanine nucleotide exchange factors (GEFs) which promote the exchange of bound GDP for free GTP. Regulated by GTPase activating proteins (GAPs) including TBC1D20 which increases the GTP hydrolysis activity. Inhibited by GDP dissociation inhibitors (GDIs). In terms of biological role, the small GTPases Rab are key regulators of intracellular membrane trafficking, from the formation of transport vesicles to their fusion with membranes. Rabs cycle between an inactive GDP-bound form and an active GTP-bound form that is able to recruit to membranes different set of downstream effectors directly responsible for vesicle formation, movement, tethering and fusion. Plays a role in the initial events of the autophagic vacuole development which take place at specialized regions of the endoplasmic reticulum. Regulates vesicular transport between the endoplasmic reticulum and successive Golgi compartments. Required to modulate the compacted morphology of the Golgi. Promotes the recruitment of lipid phosphatase MTMR6 to the endoplasmic reticulum-Golgi intermediate compartment. This Rattus norvegicus (Rat) protein is Ras-related protein Rab-1B (Rab1b).